The sequence spans 476 residues: Tryptophan--tRNA ligase, cytoplasmic (476 aa).

The interval 1–117 (MADMSNGEQG…LIVRFGSSKI (117 aa)) is dispensable to the catalytic activity. Residues 13 to 69 (SPLELFHSIAAQGELVRDLKARNAAKDEIDSAVKMLLSLKTSYKAATGEDYKVDCPP) form the WHEP-TRS domain. Residues 63–83 (YKVDCPPGDPAPESGEGLDAT) form a disordered region. At K159 the chain carries N6-succinyllysine. The 'HIGH' region motif lies at 169–178 (PSSEAMHVGH). The 'KMSKS' region signature appears at 354-358 (KMSAS). Position 356 is a phosphoserine (S356).

The protein belongs to the class-I aminoacyl-tRNA synthetase family. As to quaternary structure, homodimer. Interacts with oxidized form of GAPDH. In terms of processing, proteolytic cleavage generates 2 forms; T1-TrpRS and T2-TrpRS.

The protein resides in the cytoplasm. It carries out the reaction tRNA(Trp) + L-tryptophan + ATP = L-tryptophyl-tRNA(Trp) + AMP + diphosphate + H(+). Its function is as follows. T1-TrpRS has aminoacylation activity while T2-TrpRS lacks it. T1-TrpRS and T2-TrpRS possess angiostatic activity. T2-TrpRS inhibits fluid shear stress-activated responses of endothelial cells. Regulates ERK, Akt, and eNOS activation pathways that are associated with angiogenesis, cytoskeletal reorganization and shear stress-responsive gene expression. This chain is Tryptophan--tRNA ligase, cytoplasmic (WARS1), found in Bos taurus (Bovine).